Reading from the N-terminus, the 1957-residue chain is [F-actin]-monooxygenase MICAL2 (1957 aa).

The monooxygenase domain stretch occupies residues 2 to 494 (GENEDEKQAQ…KHLYITKELE (493 aa)). FAD is bound by residues Cys97, 116 to 118 (EKR), 123 to 125 (RNN), Phe183, Tyr298, and Asp398. Residues 516 to 619 (DIRPSKLLTW…MVMYLSKFYE (104 aa)) form the Calponin-homology (CH) domain. Ser631 is subject to Phosphoserine. A Nuclear localization signal motif is present at residues 660–681 (RKRTPRVDGQTGENDMNKRRRK). Disordered stretches follow at residues 660–714 (RKRT…NQNK) and 886–942 (QNKL…HPSH). Over residues 687-714 (DEPSNFSSRSLGSNQECGSSKEGGNQNK) the composition is skewed to polar residues. The segment covering 899–910 (PPSPPSRLPSPD) has biased composition (pro residues). Low complexity predominate over residues 911–925 (PAASSSPSTVDSASP). The region spanning 1000–1062 (DTCYFCKKRV…KPHFIHCKTN (63 aa)) is the LIM zinc-binding domain. Zn(2+) is bound by residues Cys1002, Cys1005, His1023, Cys1026, Cys1029, Cys1032, Cys1052, and His1055. Disordered regions lie at residues 1070 to 1143 (AELK…PSEW), 1168 to 1243 (SEDS…TPSK), 1258 to 1345 (VNKR…LYLP), 1361 to 1431 (GEDG…EGGP), 1467 to 1626 (KAGE…SPPC), and 1675 to 1779 (ESRQ…KEKK). Over residues 1185-1195 (SHTEPCEEKPW) the composition is skewed to basic and acidic residues. The segment covering 1232-1243 (RANSFQSPTPSK) has biased composition (polar residues). Positions 1275–1294 (LPSSSSHSSSPPSSSSTSVS) are enriched in low complexity. Residues 1302–1316 (SPPQMTASEPLSQVS) show a composition bias toward polar residues. The segment at 1324-1363 (TPNFRRRAVAQGAPREIPLYLPHHPKPEWAEYCLVSPGED) is interaction with MAPK1. Basic and acidic residues-rich tracts occupy residues 1388–1402 (SNHRDPHPIWGKDRS) and 1413–1431 (GEDREKGSTGARKEEEGGP). A compositionally biased stretch (low complexity) spans 1485 to 1496 (VLKPVRPLLLPR). Positions 1552 to 1562 (GGKKAWAKQES) are enriched in basic and acidic residues. A compositionally biased stretch (polar residues) spans 1570–1579 (CTRSFSLRKT). A Phosphoserine modification is found at Ser1688. The segment covering 1718 to 1733 (APPPPPPPPPPPPPPT) has biased composition (pro residues). Over residues 1751–1762 (ASSSASSTSSSS) the composition is skewed to low complexity. A bMERB domain is found at 1796–1945 (KQEELKRLYK…EKAEDQHFES (150 aa)).

It belongs to the Mical family. Interacts with PLXNA4. Interacts with RAB1B. Interacts with MAPK1/ERK2. Interacts with RAB35, RAB8A, RAB10, RAB13 and RAB15 (in their GTP-bound forms); binding to RAB35 is of low affinity compared to other Rab proteins; at least in case of RAB8A may bind 2 molecules of RAB8A simultaneously through a high and a low affinity binding site, respectively. May interact with MAPK1/ERK2. Interacts with CORO1C; this interaction recruits MICAL2 to the actin filaments. Requires FAD as cofactor.

The protein resides in the nucleus. The protein localises to the cytoplasm. The catalysed reaction is L-methionyl-[F-actin] + NADPH + O2 + H(+) = L-methionyl-(R)-S-oxide-[F-actin] + NADP(+) + H2O. With respect to regulation, specifically inhibited by CCG-1423, a small molecule inhibitor of SRF:MKL1/MRTF-A-dependent transcription. In terms of biological role, methionine monooxygenase that promotes depolymerization of F-actin by mediating oxidation of residues 'Met-44' and 'Met-47' on actin to form methionine-sulfoxide, resulting in actin filament disassembly and preventing repolymerization. Regulates the disassembly of branched actin networks also by oxidizing ARP3B-containing ARP2/3 complexes leading to ARP3B dissociation from the network. Acts as a key regulator of the SRF signaling pathway elicited by nerve growth factor and serum: mediates oxidation and subsequent depolymerization of nuclear actin, leading to increase MKL1/MRTF-A presence in the nucleus and promote SRF:MKL1/MRTF-A-dependent gene transcription. Does not activate SRF:MKL1/MRTF-A through RhoA. The protein is [F-actin]-monooxygenase MICAL2 of Homo sapiens (Human).